Consider the following 285-residue polypeptide: 2,3,4,5-tetrahydropyridine-2,6-dicarboxylate N-succinyltransferase (285 aa).

Residues Arg111 and Asp148 each contribute to the substrate site.

It belongs to the transferase hexapeptide repeat family. Homotrimer.

It localises to the cytoplasm. The enzyme catalyses (S)-2,3,4,5-tetrahydrodipicolinate + succinyl-CoA + H2O = (S)-2-succinylamino-6-oxoheptanedioate + CoA. It participates in amino-acid biosynthesis; L-lysine biosynthesis via DAP pathway; LL-2,6-diaminopimelate from (S)-tetrahydrodipicolinate (succinylase route): step 1/3. This Sinorhizobium fredii (strain NBRC 101917 / NGR234) protein is 2,3,4,5-tetrahydropyridine-2,6-dicarboxylate N-succinyltransferase.